The primary structure comprises 643 residues: Threonine--tRNA ligase (643 aa).

Residues 1 to 61 form the TGS domain; the sequence is MPIITLPDGS…TEDSKLEIIT (61 aa). The interval 243-534 is catalytic; it reads DHRKIGKALD…ITEEYAGFFP (292 aa). Residues Cys334, His385, and His511 each coordinate Zn(2+).

This sequence belongs to the class-II aminoacyl-tRNA synthetase family. As to quaternary structure, homodimer. The cofactor is Zn(2+).

It is found in the cytoplasm. The enzyme catalyses tRNA(Thr) + L-threonine + ATP = L-threonyl-tRNA(Thr) + AMP + diphosphate + H(+). Functionally, catalyzes the attachment of threonine to tRNA(Thr) in a two-step reaction: L-threonine is first activated by ATP to form Thr-AMP and then transferred to the acceptor end of tRNA(Thr). Also edits incorrectly charged L-seryl-tRNA(Thr). This Pasteurella multocida (strain Pm70) protein is Threonine--tRNA ligase.